A 354-amino-acid chain; its full sequence is 3-isopropylmalate dehydrogenase (354 aa).

Residue 74 to 87 (GPKWDDLPPEKRPE) coordinates NAD(+). Substrate-binding residues include Arg95, Arg105, Arg134, and Asp219. Mg(2+)-binding residues include Asp219, Asp243, and Asp247. 275-287 (GSAPDIAGKNIAN) serves as a coordination point for NAD(+).

This sequence belongs to the isocitrate and isopropylmalate dehydrogenases family. LeuB type 1 subfamily. As to quaternary structure, homodimer. The cofactor is Mg(2+). Requires Mn(2+) as cofactor.

It localises to the cytoplasm. The enzyme catalyses (2R,3S)-3-isopropylmalate + NAD(+) = 4-methyl-2-oxopentanoate + CO2 + NADH. It functions in the pathway amino-acid biosynthesis; L-leucine biosynthesis; L-leucine from 3-methyl-2-oxobutanoate: step 3/4. Functionally, catalyzes the oxidation of 3-carboxy-2-hydroxy-4-methylpentanoate (3-isopropylmalate) to 3-carboxy-4-methyl-2-oxopentanoate. The product decarboxylates to 4-methyl-2 oxopentanoate. The polypeptide is 3-isopropylmalate dehydrogenase (leuB) (Thermotoga maritima (strain ATCC 43589 / DSM 3109 / JCM 10099 / NBRC 100826 / MSB8)).